The primary structure comprises 596 residues: A-type ATP synthase subunit A (596 aa).

Gly-241–Thr-248 is an ATP binding site.

The protein belongs to the ATPase alpha/beta chains family. In terms of assembly, has multiple subunits with at least A(3), B(3), C, D, E, F, H, I and proteolipid K(x).

The protein localises to the cell membrane. The enzyme catalyses ATP + H2O + 4 H(+)(in) = ADP + phosphate + 5 H(+)(out). In terms of biological role, component of the A-type ATP synthase that produces ATP from ADP in the presence of a proton gradient across the membrane. The A chain is the catalytic subunit. This is A-type ATP synthase subunit A from Ignicoccus hospitalis (strain KIN4/I / DSM 18386 / JCM 14125).